We begin with the raw amino-acid sequence, 240 residues long: NADPH-flavin oxidoreductase (240 aa).

FMN contacts are provided by residues His-11–Arg-15, Ser-39, Gln-67–Tyr-69, Tyr-128–Gly-131, and Lys-167–Arg-169.

It belongs to the flavin oxidoreductase frp family. As to quaternary structure, homodimer.

The catalysed reaction is FMNH2 + NADP(+) = FMN + NADPH + 2 H(+). Its function is as follows. Catalyzes the NADPH-dependent reduction of FMN to FMNH(2). Involved in bioluminescence by providing FMNH(2) to luciferase. The polypeptide is NADPH-flavin oxidoreductase (Vibrio harveyi (Beneckea harveyi)).